We begin with the raw amino-acid sequence, 348 residues long: Succinoglycan biosynthesis protein ExoO (348 aa).

The tract at residues 322–348 (HSAPRAAPVTAAAERSPLGNDPRISKG) is disordered. A compositionally biased stretch (low complexity) spans 324–334 (APRAAPVTAAA).

The protein belongs to the glycosyltransferase 2 family.

It is found in the cytoplasm. The protein operates within glycan metabolism; exopolysaccharide biosynthesis. Glycosyltransferase required for the synthesis of succinoglycan (EPS I). Needed for the addition of the fifth sugar (glucose), catalyzes the formation of a beta-1,6 linkage between the fourth and fifth sugar. In Rhizobium meliloti (strain 1021) (Ensifer meliloti), this protein is Succinoglycan biosynthesis protein ExoO (exoO).